A 377-amino-acid chain; its full sequence is Acetyltransferase ple2 (377 aa).

Residues 1-27 form the signal peptide; that stretch reads MKPFSPELLVLSFILLVLSCAIRPAKG. Helical transmembrane passes span 29–49, 56–76, 176–196, and 258–278; these read WILW…TTGD, IANN…LTDV, IAAW…ALSL, and PALY…HAIG.

This sequence belongs to the wax synthase family.

Its subcellular location is the membrane. It participates in secondary metabolite biosynthesis; terpenoid biosynthesis. Functionally, acetyltransferase; part of the gene cluster that mediates the biosynthesis of pleuromutilin, a tricyclic diterpene showing antibacterial properties. The geranylgeranyl diphosphate (GGPP) synthase ple4 catalyzes the first step in pleuromutilin biosynthesis. GGPP is then substrate of the premutilin synthase (PS) ple3 to yield premutilin. Premutilin synthase is a bifunctional enzyme composed of the fusion of a class II diterpene cyclase (DTC) and a class I diterpene synthase (DTS), with the corresponding domains and active sites containing characteristic aspartate-rich motifs. GGPP is first converted to mutildienyl-diphosphate (MPP) at the class II DTC site. MPP is subsequently further cyclized at the class I DTS site, followed by a 1,5-hydride shift and addition of water prior to terminating deprotonation, to yield premutilin. The cytochrome P450 monooxygenases ple5 and ple6 hydroxylate premutilin at C-11 and C-3, respectively, producing 11-hydroxypremutilin and 3-hydroxypremutilin. The combination of the actions of both ple5 and ple6 leads to the production of 3,11-dihydroxypremutilin. The short chain dehydrogenase ple7 further converts 3,11-dihydroxypremutilin into mutilin. The acetyltransferase ple2 then acetylates mutilin to produce 14-O-acetylmutilin. Finally, the cytochrome P450 monooxygenase ple1 catalyzes hydroxylation on the alpha position of the acetyl side chain of 14-O-acetylmutilin to yield pleuromutilin. This is Acetyltransferase ple2 from Rhodocybe pseudopiperita (Clitopilus pseudopiperitus).